Consider the following 391-residue polypeptide: E3 ubiquitin-protein ligase RMND5A (391 aa).

N-acetylmethionine is present on Met-1. The region spanning 114-146 (SQRLLNEVMVEHFFRQGMLDVAEELCQESGLSV) is the LisH domain. Residues 153–210 (PFVELNRILEALKVRVLRPALEWAVSNREMLIAQNSSLEFKLHRLYFISLLMGGTTNQ) form the CTLH domain. The RING-Gid-type zinc finger occupies 336–377 (CPILRQQTTDNNPPMKLVCGHIISRDALNKMFNGSKLKCPYC).

As to quaternary structure, identified in the CTLH complex that contains GID4, RANBP9 and/or RANBP10, MKLN1, MAEA, RMND5A (or alternatively its paralog RMND5B), GID8, ARMC8, WDR26 and YPEL5. Within this complex, MAEA, RMND5A (or alternatively its paralog RMND5B), GID8, WDR26, and RANBP9 and/or RANBP10 form the catalytic core, while GID4, MKLN1, ARMC8 and YPEL5 have ancillary roles.

It localises to the nucleus. The protein localises to the nucleoplasm. Its subcellular location is the cytoplasm. It catalyses the reaction S-ubiquitinyl-[E2 ubiquitin-conjugating enzyme]-L-cysteine + [acceptor protein]-L-lysine = [E2 ubiquitin-conjugating enzyme]-L-cysteine + N(6)-ubiquitinyl-[acceptor protein]-L-lysine.. Functionally, core component of the CTLH E3 ubiquitin-protein ligase complex that selectively accepts ubiquitin from UBE2H and mediates ubiquitination and subsequent proteasomal degradation of the transcription factor HBP1. MAEA and RMND5A are both required for catalytic activity of the CTLH E3 ubiquitin-protein ligase complex. Catalytic activity of the complex is required for normal cell proliferation. The CTLH E3 ubiquitin-protein ligase complex is not required for the degradation of enzymes involved in gluconeogenesis, such as FBP1. This Mus musculus (Mouse) protein is E3 ubiquitin-protein ligase RMND5A (Rmnd5a).